We begin with the raw amino-acid sequence, 426 residues long: Immunoglobulin mu Fc receptor (426 aa).

The signal sequence occupies residues 1-16; sequence MNLWLWLLYFLPVSGT. Residues 24–121 enclose the Ig-like domain; that stretch reads RLEVELGGSV…GKTQKVTLNV (98 aa). Cystine bridges form between Cys-37/Cys-103 and Cys-49/Cys-58. Thr-91 is modified (phosphothreonine). Positions 178-212 are disordered; it reads KTEAPPVHQPSTNTSVSRHPRVYGASSETPTKPSA. The chain crosses the membrane as a helical span at residues 267-287; it reads FHILIPTFLGFLLLVLLGLVV. Disordered stretches follow at residues 306 to 346 and 401 to 426; these read RRMR…REPD and DSNDYINIPGLPHLPSKPPGPRPSRQ. Residues 415 to 426 show a composition bias toward pro residues; it reads PSKPPGPRPSRQ.

In terms of assembly, interacts (via Ig-like domain) with IGHM (via CH4/Cmu4 domain), both secreted and membrane-bound IgM; the interaction is glycan-independent and multivalent theoretically involving up to eight binding sites for the IgM pentamer. Phosphorylated on both Tyr and Ser residues. Post-translationally, O-glycosylated. Sialylated. O-linked glycans regulate trafficking to the plasma membrane.

Its subcellular location is the cell membrane. It is found in the early endosome membrane. The protein localises to the golgi apparatus. It localises to the trans-Golgi network membrane. The protein resides in the lysosome membrane. Its function is as follows. High-affinity Fc receptor for immunoglobulin M (IgM), both secreted and membrane-bound IgM. Primarily regulates IgM transport and homeostasis. In lymphoid cells, enables exocytosis of membrane-bound IgM on the plasma membrane as well as endocytosis of IgM-antigen complexes toward lysosomes for degradation. In mucosal epithelium, mediates retrotranscytosis of antigen-IgM complexes across mucosal M cells toward antigen-presenting cells in mucosal lymphoid tissues. Triggers costimulatory signaling and mediates most of IgM effector functions involved in B cell development and primary immune response to infection. Likely limits tonic IgM BCR signaling to self-antigens for proper negative selection of autoreactive B cells in the bone marrow and for the maintenance of regulatory B cell pool in peripheral lymphoid organs. Mediates antibody responses to T cell-dependent and T cell-independent antigens and promotes induction of an efficient neutralizing IgG response. Engages in cross-talk with antigen-receptor signaling via the non-canonical NF-kappa-B, MAP kinases and calcium signaling pathways. This chain is Immunoglobulin mu Fc receptor, found in Rattus norvegicus (Rat).